The following is a 529-amino-acid chain: GTPase Obg (529 aa).

An Obg domain is found at 2-159 (ASFVDRVVLH…SDIVLELKSI (158 aa)). The 184-residue stretch at 160 to 343 (ADIALVGFPS…LGFAMAEIVK (184 aa)) folds into the OBG-type G domain. GTP contacts are provided by residues 166–173 (GFPSAGKS), 191–195 (FTTLI), 212–215 (DVPG), 295–298 (NKVD), and 324–326 (SAT). The Mg(2+) site is built by Ser173 and Thr193. The region spanning 363–447 (PRAVNETGFR…DDGVVFDWEP (85 aa)) is the OCT domain. Positions 461 to 529 (GTDIRFADTG…ESGLDSGDES (69 aa)) are disordered. Residues 462 to 502 (TDIRFADTGDRPTRSQKREEQQERRDAKAAARAELEAERKA) show a composition bias toward basic and acidic residues.

The protein belongs to the TRAFAC class OBG-HflX-like GTPase superfamily. OBG GTPase family. As to quaternary structure, monomer. The cofactor is Mg(2+).

The protein resides in the cytoplasm. An essential GTPase which binds GTP, GDP and possibly (p)ppGpp with moderate affinity, with high nucleotide exchange rates and a fairly low GTP hydrolysis rate. Plays a role in control of the cell cycle, stress response, ribosome biogenesis and in those bacteria that undergo differentiation, in morphogenesis control. The polypeptide is GTPase Obg (Pseudarthrobacter chlorophenolicus (strain ATCC 700700 / DSM 12829 / CIP 107037 / JCM 12360 / KCTC 9906 / NCIMB 13794 / A6) (Arthrobacter chlorophenolicus)).